Consider the following 1335-residue polypeptide: Aldehyde oxidase 2 (1335 aa).

The 88-residue stretch at 8 to 95 (DVLVFFVNGR…GAAVTTVEGV (88 aa)) folds into the 2Fe-2S ferredoxin-type domain. The [2Fe-2S] cluster site is built by cysteine 47, cysteine 52, cysteine 55, and cysteine 77. Glutamine 116 lines the Mo-molybdopterin pocket. Positions 117, 120, 152, and 154 each coordinate [2Fe-2S] cluster. Cysteine 154 provides a ligand contact to Mo-molybdopterin. Positions 242 to 427 (FRGDRVTWVS…ESVHIPHSQK (186 aa)) constitute an FAD-binding PCMH-type domain. Residues 270-277 (LVLGNTAL), alanine 351, serine 360, histidine 364, aspartate 373, and leucine 417 contribute to the FAD site. Mo-molybdopterin contacts are provided by residues 821 to 822 (GF), 1103 to 1106 (ASVG), glutamine 1218, and leucine 1285. Glutamate 1287 functions as the Proton acceptor; for azaheterocycle hydroxylase activity in the catalytic mechanism.

Belongs to the xanthine dehydrogenase family. Homodimer. [2Fe-2S] cluster is required as a cofactor. It depends on FAD as a cofactor. The cofactor is Mo-molybdopterin. In terms of tissue distribution, detected in kidney, Harderian gland and olfactory mucosa.

It localises to the cytoplasm. The catalysed reaction is an aldehyde + O2 + H2O = a carboxylate + H2O2 + H(+). Functionally, oxidase with broad substrate specificity, oxidizing aromatic azaheterocycles, such as phthalazine, as well as aldehydes, such as benzaldehyde and retinal. The sequence is that of Aldehyde oxidase 2 (AOX2) from Cavia porcellus (Guinea pig).